The chain runs to 351 residues: Soluble interferon alpha/beta receptor OPG204 (351 aa).

An N-terminal signal peptide occupies residues 1 to 23 (MKMKMMVRIYFVSLSLLLFHSYA). Ig-like C2-type domains follow at residues 65–137 (LGEP…KNGD) and 155–237 (PKTY…IVVS). 2 disulfides stabilise this stretch: C73/C129 and C172/C221. Residues N117, N182, N261, N269, and N321 are each glycosylated (N-linked (GlcNAc...) asparagine; by host). Positions 246–345 (PSQDHRFKLI…HNYYFDKTLT (100 aa)) constitute an Ig-like V-type domain. C272 and C333 are joined by a disulfide.

It belongs to the interleukin-1 receptor family. Interacts with host IFNA1.

Its subcellular location is the secreted. Counteracts the antiviral effects of host IFN-alpha/beta and key IFN-inducible proteins involved in viral RNA degradation suxh as host OAS1. Acts as a soluble IFN-alpha receptor and thus inhibits the interaction between host IFN-alpha and its receptor. This is Soluble interferon alpha/beta receptor OPG204 (OPG204) from Cynomys gunnisoni (Gunnison's prairie dog).